The following is a 465-amino-acid chain: Glutamate--tRNA ligase (465 aa).

A 'HIGH' region motif is present at residues 11-21; that stretch reads PSPTGFIHLGN. The disordered stretch occupies residues 118 to 139; the sequence is GEKPRYDGTWRPAPGKILPPPP. Residues 243 to 247 carry the 'KMSKS' region motif; the sequence is KMSKR. Lysine 246 lines the ATP pocket.

This sequence belongs to the class-I aminoacyl-tRNA synthetase family. Glutamate--tRNA ligase type 1 subfamily. In terms of assembly, monomer.

Its subcellular location is the cytoplasm. The enzyme catalyses tRNA(Glu) + L-glutamate + ATP = L-glutamyl-tRNA(Glu) + AMP + diphosphate. Its function is as follows. Catalyzes the attachment of glutamate to tRNA(Glu) in a two-step reaction: glutamate is first activated by ATP to form Glu-AMP and then transferred to the acceptor end of tRNA(Glu). The chain is Glutamate--tRNA ligase from Ralstonia pickettii (strain 12J).